Reading from the N-terminus, the 574-residue chain is Calcium-dependent protein kinase 9 (574 aa).

The segment at 1 to 64 (MGNTCCVAPA…RARAKPNPYD (64 aa)) is disordered. Glycine 2 carries the N-myristoyl glycine lipid modification. Positions 28–40 (KSPAPSATTTTAT) are enriched in low complexity. Residues 101-359 (YQLGRELGRG…AQQVLDHPWL (259 aa)) enclose the Protein kinase domain. ATP contacts are provided by residues 107–115 (LGRGEFGVT) and lysine 130. The active-site Proton acceptor is aspartate 225. An autoinhibitory domain region spans residues 365–395 (APNVPLGDVVRARLKQFSLMNRLKKKAMRVI). EF-hand domains are found at residues 402–437 (EEVE…VGSK), 438–473 (LAEP…LQRL), 474–509 (SNDN…DSGH), and 510–545 (ADDA…GTDW). 20 residues coordinate Ca(2+): aspartate 415, aspartate 417, asparagine 419, arginine 421, glutamate 426, aspartate 451, aspartate 453, asparagine 455, tyrosine 457, glutamate 462, aspartate 487, aspartate 489, serine 491, tyrosine 493, glutamate 498, aspartate 523, aspartate 525, aspartate 527, arginine 529, and glutamate 534.

The protein belongs to the protein kinase superfamily. Ser/Thr protein kinase family. CDPK subfamily. Expressed in leaf blades and stems. Expressed at low levels in anthers and spikelets.

It localises to the membrane. The catalysed reaction is L-seryl-[protein] + ATP = O-phospho-L-seryl-[protein] + ADP + H(+). It catalyses the reaction L-threonyl-[protein] + ATP = O-phospho-L-threonyl-[protein] + ADP + H(+). Its activity is regulated as follows. Activated by calcium. Autophosphorylation may play an important role in the regulation of the kinase activity. Functionally, may play a role in signal transduction pathways that involve calcium as a second messenger. Functions in signal transduction pathways that positively regulate responses to drought, osmotic, and dehydration stress. Regulates expression of stress-associated genes in response to drought. Involved in tolerance to drought stress by increasing proline and soluble sugars, and improving stomatal closure. Required for pollen maturation and spikelet fertility. This Oryza sativa subsp. japonica (Rice) protein is Calcium-dependent protein kinase 9.